We begin with the raw amino-acid sequence, 174 residues long: Acetolactate synthase small subunit (174 aa).

The region spanning 4-78 is the ACT domain; it reads TLSVLVQDEA…NILNVQDVTN (75 aa).

The protein belongs to the acetolactate synthase small subunit family. In terms of assembly, dimer of large and small chains.

It is found in the plastid. Its subcellular location is the chloroplast. It catalyses the reaction 2 pyruvate + H(+) = (2S)-2-acetolactate + CO2. The protein operates within amino-acid biosynthesis; L-isoleucine biosynthesis; L-isoleucine from 2-oxobutanoate: step 1/4. It functions in the pathway amino-acid biosynthesis; L-valine biosynthesis; L-valine from pyruvate: step 1/4. This Porphyra purpurea (Red seaweed) protein is Acetolactate synthase small subunit (ilvH).